Reading from the N-terminus, the 230-residue chain is Ion-translocating oxidoreductase complex subunit E (230 aa).

Transmembrane regions (helical) follow at residues 39-59 (LGLGIATLLVLVGSNVTVSLV), 69-89 (IPVFVMIIASLVTCVQLLMNA), 93-113 (GLYLSLGIFIPLIVTNCIIIG), 124-144 (VLPAALDGFWMGLGMTSVLVV), and 182-202 (AFLLALLPPGAFIGVGFLIAA).

The protein belongs to the NqrDE/RnfAE family. In terms of assembly, the complex is composed of six subunits: RnfA, RnfB, RnfC, RnfD, RnfE and RnfG.

The protein localises to the cell inner membrane. In terms of biological role, part of a membrane-bound complex that couples electron transfer with translocation of ions across the membrane. This is Ion-translocating oxidoreductase complex subunit E from Vibrio cholerae serotype O1 (strain ATCC 39315 / El Tor Inaba N16961).